A 949-amino-acid chain; its full sequence is Serine/threonine-protein kinase KIPK2 (949 aa).

4 disordered regions span residues 79-116 (LETS…VGPS), 323-344 (TALS…TEKS), 407-426 (STST…DKNV), and 495-525 (SSEK…SNLS). Low complexity predominate over residues 81-94 (TSASAGTSRSTSPS). Composition is skewed to polar residues over residues 407–420 (STST…NTSH) and 495–512 (SSEK…LGDY). Residues 513–525 (SSSTSMSEESNLS) are compositionally biased toward low complexity. Residues 559–898 (FNLLKKLGCG…AAEIKRHPFF (340 aa)) enclose the Protein kinase domain. ATP is bound by residues 565–573 (LGCGDIGTV) and K588. The active-site Proton acceptor is the D684.

The protein belongs to the protein kinase superfamily. Ser/Thr protein kinase family. Interacts with KCBP, PERK8, PERK9, PERK10 and PERK13.

It carries out the reaction L-seryl-[protein] + ATP = O-phospho-L-seryl-[protein] + ADP + H(+). The enzyme catalyses L-threonyl-[protein] + ATP = O-phospho-L-threonyl-[protein] + ADP + H(+). Functionally, serine/threonine-protein kinase that could be involved in the negative regulation of root growth. In Arabidopsis thaliana (Mouse-ear cress), this protein is Serine/threonine-protein kinase KIPK2.